Reading from the N-terminus, the 194-residue chain is dTTP/UTP pyrophosphatase (194 aa).

Aspartate 76 functions as the Proton acceptor in the catalytic mechanism.

This sequence belongs to the Maf family. YhdE subfamily. A divalent metal cation serves as cofactor.

The protein resides in the cytoplasm. It carries out the reaction dTTP + H2O = dTMP + diphosphate + H(+). The enzyme catalyses UTP + H2O = UMP + diphosphate + H(+). In terms of biological role, nucleoside triphosphate pyrophosphatase that hydrolyzes dTTP and UTP. May have a dual role in cell division arrest and in preventing the incorporation of modified nucleotides into cellular nucleic acids. In Shewanella oneidensis (strain ATCC 700550 / JCM 31522 / CIP 106686 / LMG 19005 / NCIMB 14063 / MR-1), this protein is dTTP/UTP pyrophosphatase.